A 386-amino-acid polypeptide reads, in one-letter code: S-adenosylmethionine synthase (386 aa).

H16 contributes to the ATP binding site. D18 serves as a coordination point for Mg(2+). E44 is a binding site for K(+). L-methionine contacts are provided by E57 and Q100. Residues 100 to 110 (QSPDINVGVDQ) form a flexible loop region. Residues 164 to 166 (DGK), 231 to 232 (RF), D240, 246 to 247 (RK), A263, and K267 contribute to the ATP site. Position 240 (D240) interacts with L-methionine. K271 is a binding site for L-methionine.

It belongs to the AdoMet synthase family. In terms of assembly, homotetramer; dimer of dimers. Mg(2+) is required as a cofactor. The cofactor is K(+).

The protein resides in the cytoplasm. The catalysed reaction is L-methionine + ATP + H2O = S-adenosyl-L-methionine + phosphate + diphosphate. It participates in amino-acid biosynthesis; S-adenosyl-L-methionine biosynthesis; S-adenosyl-L-methionine from L-methionine: step 1/1. In terms of biological role, catalyzes the formation of S-adenosylmethionine (AdoMet) from methionine and ATP. The overall synthetic reaction is composed of two sequential steps, AdoMet formation and the subsequent tripolyphosphate hydrolysis which occurs prior to release of AdoMet from the enzyme. This chain is S-adenosylmethionine synthase, found in Sulfurovum sp. (strain NBC37-1).